The sequence spans 476 residues: MKMSLDKLYEVIDKKKDEFVTRLSRAVSIPSVSADVTLRPKVVEMADFVVSEFTKLGAKMEKRDIGYHQMDGQDVPLPPIVLGQYGNDPSKKTVLIYNHFDVQPASLEDGWSTDPFTLTVDNKGRMFGRGATDDKGPLIGWISAIEAHKELGIDFPVNLLMCFEGMEEYGSEGLEDLIRAEAEKYFAKADCVCISDTYWLGTKKPVLTYGLRGVCYFNITVEGPSADLHSGVFGGTVHEPMTDLVAIMSTLVKPNGEILIPGIMDQVAELTPTEDSIYDGIDYTMEDLKEAVGADISIYPDPKRTLQHRWRYPTLSLHGIEGAFSGSGAKTVIPAKVIGKFSIRTVPNMESETVERLVKEHVTKVFNSLNSKNKLAFNNMHSGSWWISSPDHWHYDVGKKATERVYGITPDFVREGGSIPVTVTFEQSLKKNVLLLPMGRGDDGAHSINEKLDLDNFLKGIKLFCTYVHELASVSP.

H99 contacts Zn(2+). D101 is an active-site residue. D133 is a Zn(2+) binding site. Catalysis depends on E167, which acts as the Proton acceptor. Zn(2+)-binding residues include E168, D196, and H446.

This sequence belongs to the peptidase M20A family. In terms of assembly, homodimer. Component of the GSH degradosomal complex. Requires Zn(2+) as cofactor. Mn(2+) is required as a cofactor.

The protein localises to the cytoplasm. In terms of biological role, catalytic component of the GSH degradosomal complex involved in the degradation of glutathione (GSH) and other peptides containing a gamma-glu-X bond. Has a Gly-Cys dipeptidase activity. In Schizosaccharomyces pombe (strain 972 / ATCC 24843) (Fission yeast), this protein is Cys-Gly metallodipeptidase dug1 (dug1).